The primary structure comprises 199 residues: Phosphatidylethanolamine N-methyltransferase (199 aa).

Residues M1–E12 are Lumenal-facing. An intramembrane region (helical) is located at residues P13–A33. The Lumenal portion of the chain corresponds to R34–A45. Residues F46–L66 form a helical membrane-spanning segment. The Cytoplasmic portion of the chain corresponds to R67–G93. A helical membrane pass occupies residues L94–T114. S-adenosyl-L-methionine is bound at residue G98 to G100. The Lumenal portion of the chain corresponds to G115 to H157. A helical membrane pass occupies residues A158–L178. Residues Y179–S199 lie on the Cytoplasmic side of the membrane. Position 180–181 (E180–E181) interacts with S-adenosyl-L-methionine.

Belongs to the class VI-like SAM-binding methyltransferase superfamily. PEMT/PEM2 methyltransferase family. Expressed in liver (at protein level).

The protein resides in the endoplasmic reticulum membrane. It localises to the mitochondrion membrane. The catalysed reaction is a 1,2-diacyl-sn-glycero-3-phospho-N-methylethanolamine + S-adenosyl-L-methionine = a 1,2-diacyl-sn-glycero-3-phospho-N,N-dimethylethanolamine + S-adenosyl-L-homocysteine + H(+). It carries out the reaction a 1,2-diacyl-sn-glycero-3-phospho-N,N-dimethylethanolamine + S-adenosyl-L-methionine = a 1,2-diacyl-sn-glycero-3-phosphocholine + S-adenosyl-L-homocysteine + H(+). It catalyses the reaction a 1,2-diacyl-sn-glycero-3-phosphoethanolamine + S-adenosyl-L-methionine = a 1,2-diacyl-sn-glycero-3-phospho-N-methylethanolamine + S-adenosyl-L-homocysteine + H(+). The enzyme catalyses 1,2-di-(9Z-octadecenoyl)-sn-glycero-3-phosphoethanolamine + S-adenosyl-L-methionine = 1,2-di-(9Z-octadecenoyl)-sn-glycero-3-phospho-N-methylethanolamine + S-adenosyl-L-homocysteine + H(+). The catalysed reaction is 1,2-di-(9Z-octadecenoyl)-sn-glycero-3-phospho-N-methylethanolamine + S-adenosyl-L-methionine = 1,2-di-(9Z-octadecenoyl)-sn-glycero-3-phospho-N,N-dimethylethanolamine + S-adenosyl-L-homocysteine + H(+). It carries out the reaction 1,2-di-(9Z-octadecenoyl)-sn-glycero-3-phospho-N,N-dimethylethanolamine + S-adenosyl-L-methionine = 1,2-di-(9Z-octadecenoyl)-sn-glycero-3-phosphocholine + S-adenosyl-L-homocysteine + H(+). It catalyses the reaction 1,2-di-(9Z,12Z-octadecadienoyl)-sn-glycero-3-phosphoethanolamine + S-adenosyl-L-methionine = 1,2-di-(9Z,12Z-octadecadienoyl)-sn-glycero-3-phospho-N-methylethanolamine + S-adenosyl-L-homocysteine + H(+). The enzyme catalyses 1,2-di-(9Z,12Z-octadecadienoyl)-sn-glycero-3-phospho-N-methylethanolamine + S-adenosyl-L-methionine = 1,2-di-(9Z,12Z-octadecadienoyl)-sn-glycero-3-phospho-N,N-dimethylethanolamine + S-adenosyl-L-homocysteine + H(+). The catalysed reaction is 1,2-di-(9Z,12Z-octadecadienoyl)-sn-glycero-3-phospho-N,N-dimethylethanolamine + S-adenosyl-L-methionine = 1,2-di-(9Z,12Z-octadecadienoyl)-sn-glycero-3-phosphocholine + S-adenosyl-L-homocysteine + H(+). It carries out the reaction 1,2-di-(9Z,12Z,15Z-octadecatrienoyl)-sn-glycero-3-phosphoethanolamine + S-adenosyl-L-methionine = 1,2-di-(9Z,12Z,15Z-octadecatrienoyl)-sn-glycero-3-phospho-N-methylethanolamine + S-adenosyl-L-homocysteine + H(+). It catalyses the reaction 1,2-di-(9Z,12Z,15Z-octadecatrienoyl)-sn-glycero-3-phospho-N-methylethanolamine + S-adenosyl-L-methionine = 1,2-di-(9Z,12Z,15Z-octadecatrienoyl)-sn-glycero-3-phospho-N,N-dimethylethanolamine + S-adenosyl-L-homocysteine + H(+). The enzyme catalyses 1,2-di-(9Z,12Z,15Z-octadecatrienoyl)-sn-glycero-3-phospho-N,N-dimethylethanolamine + S-adenosyl-L-methionine = 1,2-di-(9Z,12Z,15Z-octadecatrienoyl)-sn-glycero-3-phosphocholine + S-adenosyl-L-homocysteine + H(+). The catalysed reaction is 1-hexadecanoyl-2-(4Z,7Z,10Z,13Z,16Z,19Z-docosahexaenoyl)-sn-glycero-3-phosphoethanolamine + S-adenosyl-L-methionine = 1-hexadecanoyl-2-(4Z,7Z,10Z,13Z,16Z,19Z-docosahexaenoyl)-sn-glycero-3-phospho-N-methylethanolamine + S-adenosyl-L-homocysteine + H(+). It carries out the reaction 1-hexadecanoyl-2-(4Z,7Z,10Z,13Z,16Z,19Z-docosahexaenoyl)-sn-glycero-3-phospho-N-methylethanolamine + S-adenosyl-L-methionine = 1-hexadecanoyl-2-(4Z,7Z,10Z,13Z,16Z,19Z-docosahexaenoyl)-sn-glycero-3-phospho-N,N-dimethylethanolamine + S-adenosyl-L-homocysteine + H(+). It catalyses the reaction 1-hexadecanoyl-2-(4Z,7Z,10Z,13Z,16Z,19Z-docosahexaenoyl)-sn-glycero-3-phospho-N,N-dimethylethanolamine + S-adenosyl-L-methionine = 1-hexadecanoyl-2-(4Z,7Z,10Z,13Z,16Z,19Z-docosahexaenoyl)-sn-glycero-3-phosphocholine + S-adenosyl-L-homocysteine + H(+). It participates in phospholipid metabolism; phosphatidylcholine biosynthesis. Its function is as follows. Catalyzes the three sequential steps of the methylation pathway for the biosynthesis of phosphatidylcholine, a critical and essential component for membrane structure. Uses S-adenosylmethionine (S-adenosyl-L-methionine, SAM or AdoMet) as the methyl group donor for the methylation of phosphatidylethanolamine (1,2-diacyl-sn-glycero-3-phosphoethanolamine, PE) to phosphatidylmonomethylethanolamine (1,2-diacyl-sn-glycero-3-phospho-N-methylethanolamine, PMME), PMME to phosphatidyldimethylethanolamine (1,2-diacyl-sn-glycero-3-phospho-N,N-dimethylethanolamine, PDME), and PDME to phosphatidylcholine (1,2-diacyl-sn-glycero-3-phosphocholine, PC), producing S-adenosyl-L-homocysteine in each step. The protein is Phosphatidylethanolamine N-methyltransferase of Mus musculus (Mouse).